A 207-amino-acid polypeptide reads, in one-letter code: uncharacterized protein (207 aa).

The next 5 helical transmembrane spans lie at 28 to 48 (IAVL…IVFV), 59 to 79 (EGFI…FLIV), 112 to 132 (MFLL…VAGL), 140 to 160 (FILA…FIGY), and 165 to 185 (LITQ…LWYV).

The protein resides in the cell membrane. This is an uncharacterized protein from Bacillus subtilis (strain 168).